A 591-amino-acid chain; its full sequence is V-type ATP synthase alpha chain (591 aa).

Position 232 to 239 (232 to 239 (GPFGAGKT)) interacts with ATP.

Belongs to the ATPase alpha/beta chains family.

It catalyses the reaction ATP + H2O + 4 H(+)(in) = ADP + phosphate + 5 H(+)(out). In terms of biological role, produces ATP from ADP in the presence of a proton gradient across the membrane. The V-type alpha chain is a catalytic subunit. The protein is V-type ATP synthase alpha chain of Clostridium perfringens (strain SM101 / Type A).